Consider the following 555-residue polypeptide: MKDTVMTYLLENSIKFKGKPNPKAAMGKILGENPDLRSKVKEVNQVISEVLKEIETMSLEEQQAKLDELAPEGLGQKTERKRKEIELKNVKGNVVMRFAPNPSGPLHIGHARASVLNDFFSKKYNGKLVLRLEDTDAKRVLPEAYEMIQEDLKWLGVKVDEVIVQSERLETYYEYGRKLIEMGHAYVCDCDADEFRTLREQGLPCKCRDTTPEENIALWEKMLAGELDNVAVRLKTDIAHKNPSIRDFPIFRIERTPHPKNGTKYHVYPLMNLSVTVDDHLLGMTHVLRGKDHIVNTEKQEYIYNYFGWEIPEYVHYGILKIEGPVLSTSKMHAGILSGEYSGWDDARLGTLRALRKRGIRPEALYKLMVEIGIKQADVRFAWENLYAANKDIIDKDARRFFFVESPKKLVISGAENRKIDLRMHPDRSELGNRELLFDGEIYVSDDLEAGKMYRLMELFNIVVEKVENDIIYAKYDSDDFKVAKTNKASIIHWIPVKDSIPVTVIDENAEKIEGFAEKDFAVVKEDDFVQFERFGFVRIDEKLDNKYTCYLTHK.

The 'HIGH' region signature appears at 100–110; the sequence is PNPSGPLHIGH.

The protein belongs to the class-I aminoacyl-tRNA synthetase family. Glutamate--tRNA ligase type 2 subfamily.

The protein localises to the cytoplasm. The catalysed reaction is tRNA(Glu) + L-glutamate + ATP = L-glutamyl-tRNA(Glu) + AMP + diphosphate. Its function is as follows. Catalyzes the attachment of glutamate to tRNA(Glu) in a two-step reaction: glutamate is first activated by ATP to form Glu-AMP and then transferred to the acceptor end of tRNA(Glu). This is Glutamate--tRNA ligase from Methanococcus maripaludis (strain DSM 14266 / JCM 13030 / NBRC 101832 / S2 / LL).